The following is a 175-amino-acid chain: ATP-dependent protease subunit HslV (175 aa).

Thr5 is an active-site residue. 3 residues coordinate Na(+): Gly160, Asp163, and Thr166.

It belongs to the peptidase T1B family. HslV subfamily. A double ring-shaped homohexamer of HslV is capped on each side by a ring-shaped HslU homohexamer. The assembly of the HslU/HslV complex is dependent on binding of ATP.

It localises to the cytoplasm. The catalysed reaction is ATP-dependent cleavage of peptide bonds with broad specificity.. Its activity is regulated as follows. Allosterically activated by HslU binding. Protease subunit of a proteasome-like degradation complex believed to be a general protein degrading machinery. The protein is ATP-dependent protease subunit HslV of Myxococcus xanthus.